We begin with the raw amino-acid sequence, 984 residues long: MYCBP-associated protein (984 aa).

2 disordered regions span residues 61–88 (LEASENVKEKKRAKGPEQPTPTIQEEPE) and 218–240 (GESKQKAPKEEKRPPWAPPPQHN). Residues 218-231 (GESKQKAPKEEKRP) show a composition bias toward basic and acidic residues. Thr-613 bears the Phosphothreonine mark. Ser-619 bears the Phosphoserine mark. Disordered stretches follow at residues 693-729 (SPISETQVPRPENEALRESGSQKARVGTKSPQRKSIM) and 842-917 (PEEQ…ASQD). The segment covering 862–910 (AGKEERKGAAQEKKQLGIKDKEDKKGAKLLGKEDRPNSKKHKAKDDKKV) has biased composition (basic and acidic residues).

Interacts with MYCBP. Expressed specifically in testis.

It is found in the cytoplasm. It localises to the membrane. Functionally, may play a role in spermatogenesis. May be involved in synaptic processes. This chain is MYCBP-associated protein, found in Homo sapiens (Human).